The sequence spans 418 residues: Serine hydroxymethyltransferase (418 aa).

(6S)-5,6,7,8-tetrahydrofolate-binding positions include L120 and 124 to 126 (GHL). K229 is subject to N6-(pyridoxal phosphate)lysine. 353–355 (SPF) contributes to the (6S)-5,6,7,8-tetrahydrofolate binding site.

Belongs to the SHMT family. In terms of assembly, homodimer. Requires pyridoxal 5'-phosphate as cofactor.

The protein localises to the cytoplasm. It carries out the reaction (6R)-5,10-methylene-5,6,7,8-tetrahydrofolate + glycine + H2O = (6S)-5,6,7,8-tetrahydrofolate + L-serine. Its pathway is one-carbon metabolism; tetrahydrofolate interconversion. It participates in amino-acid biosynthesis; glycine biosynthesis; glycine from L-serine: step 1/1. Catalyzes the reversible interconversion of serine and glycine with tetrahydrofolate (THF) serving as the one-carbon carrier. This reaction serves as the major source of one-carbon groups required for the biosynthesis of purines, thymidylate, methionine, and other important biomolecules. Also exhibits THF-independent aldolase activity toward beta-hydroxyamino acids, producing glycine and aldehydes, via a retro-aldol mechanism. This chain is Serine hydroxymethyltransferase, found in Psychrobacter cryohalolentis (strain ATCC BAA-1226 / DSM 17306 / VKM B-2378 / K5).